The primary structure comprises 194 residues: NADH-quinone oxidoreductase subunit B (194 aa).

Residues cysteine 73, cysteine 74, cysteine 138, and cysteine 168 each coordinate [4Fe-4S] cluster.

It belongs to the complex I 20 kDa subunit family. In terms of assembly, NDH-1 is composed of 14 different subunits. Subunits NuoB, C, D, E, F, and G constitute the peripheral sector of the complex. [4Fe-4S] cluster is required as a cofactor.

The protein localises to the cell inner membrane. It carries out the reaction a quinone + NADH + 5 H(+)(in) = a quinol + NAD(+) + 4 H(+)(out). NDH-1 shuttles electrons from NADH, via FMN and iron-sulfur (Fe-S) centers, to quinones in the respiratory chain. The immediate electron acceptor for the enzyme in this species is believed to be ubiquinone. Couples the redox reaction to proton translocation (for every two electrons transferred, four hydrogen ions are translocated across the cytoplasmic membrane), and thus conserves the redox energy in a proton gradient. This chain is NADH-quinone oxidoreductase subunit B, found in Bradyrhizobium sp. (strain BTAi1 / ATCC BAA-1182).